We begin with the raw amino-acid sequence, 131 residues long: UPF0134 protein MPN_010 (131 aa).

This sequence belongs to the UPF0134 family.

This chain is UPF0134 protein MPN_010, found in Mycoplasma pneumoniae (strain ATCC 29342 / M129 / Subtype 1) (Mycoplasmoides pneumoniae).